Reading from the N-terminus, the 338-residue chain is DNA-directed RNA polymerase subunit alpha (338 aa).

Positions 1–226 are alpha N-terminal domain (alpha-NTD); that stretch reads MLIAQRPTLT…ELFGLARELN (226 aa). The alpha C-terminal domain (alpha-CTD) stretch occupies residues 243 to 338; sequence LAADLALPIE…DADYADEQYN (96 aa).

Belongs to the RNA polymerase alpha chain family. In terms of assembly, homodimer. The RNAP catalytic core consists of 2 alpha, 1 beta, 1 beta' and 1 omega subunit. When a sigma factor is associated with the core the holoenzyme is formed, which can initiate transcription.

It carries out the reaction RNA(n) + a ribonucleoside 5'-triphosphate = RNA(n+1) + diphosphate. In terms of biological role, DNA-dependent RNA polymerase catalyzes the transcription of DNA into RNA using the four ribonucleoside triphosphates as substrates. In Beutenbergia cavernae (strain ATCC BAA-8 / DSM 12333 / CCUG 43141 / JCM 11478 / NBRC 16432 / NCIMB 13614 / HKI 0122), this protein is DNA-directed RNA polymerase subunit alpha.